A 323-amino-acid chain; its full sequence is NADH-ubiquinone oxidoreductase chain 1 (323 aa).

Helical transmembrane passes span 9 to 29 (ILNP…LTLI), 76 to 96 (LFVL…PMPM), 107 to 127 (ILFV…SGWA), 145 to 165 (ISYE…SGGF), 175 to 195 (EATW…ISTL), 227 to 247 (LFFL…AVLF), 258 to 278 (EFTS…FLWV), and 298 to 318 (FLPL…ACAG).

This sequence belongs to the complex I subunit 1 family.

The protein resides in the mitochondrion inner membrane. The catalysed reaction is a ubiquinone + NADH + 5 H(+)(in) = a ubiquinol + NAD(+) + 4 H(+)(out). Functionally, core subunit of the mitochondrial membrane respiratory chain NADH dehydrogenase (Complex I) that is believed to belong to the minimal assembly required for catalysis. Complex I functions in the transfer of electrons from NADH to the respiratory chain. The immediate electron acceptor for the enzyme is believed to be ubiquinone. This Gadus morhua (Atlantic cod) protein is NADH-ubiquinone oxidoreductase chain 1 (MT-ND1).